Consider the following 20-residue polypeptide: Alanine aminotransferase 1 (20 aa).

The residue at position 11 (Lys11) is an N6-(pyridoxal phosphate)lysine. A glycan (N-linked (Glc) (glycation) lysine; in vitro) is linked at Lys11.

It belongs to the class-I pyridoxal-phosphate-dependent aminotransferase family. Alanine aminotransferase subfamily. As to quaternary structure, homodimer. The cofactor is pyridoxal 5'-phosphate. Glycation of Lys-11 inactivates the enzyme.

Its subcellular location is the cytoplasm. The catalysed reaction is L-alanine + 2-oxoglutarate = pyruvate + L-glutamate. The protein operates within amino-acid degradation; L-alanine degradation via transaminase pathway; pyruvate from L-alanine: step 1/1. Its function is as follows. Catalyzes the reversible transamination between alanine and 2-oxoglutarate to form pyruvate and glutamate. Participates in cellular nitrogen metabolism and also in liver gluconeogenesis starting with precursors transported from skeletal muscles. This is Alanine aminotransferase 1 (GPT) from Sus scrofa (Pig).